The primary structure comprises 408 residues: Argininosuccinate synthase (408 aa).

ATP is bound by residues 12–20 and Ala-39; that span reads AYSGGLDTS. Residues Tyr-92 and Ser-97 each contribute to the L-citrulline site. Residue Gly-122 coordinates ATP. Residues Thr-124, Asn-128, and Asp-129 each coordinate L-aspartate. Asn-128 lines the L-citrulline pocket. L-citrulline contacts are provided by Arg-132, Ser-183, Ser-192, Glu-268, and Tyr-280.

The protein belongs to the argininosuccinate synthase family. Type 1 subfamily. As to quaternary structure, homotetramer.

It localises to the cytoplasm. It catalyses the reaction L-citrulline + L-aspartate + ATP = 2-(N(omega)-L-arginino)succinate + AMP + diphosphate + H(+). It participates in amino-acid biosynthesis; L-arginine biosynthesis; L-arginine from L-ornithine and carbamoyl phosphate: step 2/3. The chain is Argininosuccinate synthase from Caulobacter vibrioides (strain ATCC 19089 / CIP 103742 / CB 15) (Caulobacter crescentus).